Consider the following 505-residue polypeptide: 2-isopropylmalate synthase (505 aa).

Residues 5–269 (IKIFDTTLRD…ETGIHTEYLY (265 aa)) enclose the Pyruvate carboxyltransferase domain. Positions 14, 204, 206, and 240 each coordinate Mn(2+). Positions 393–505 (SLLYFHTFTG…AVNRFELRKR (113 aa)) are regulatory domain.

It belongs to the alpha-IPM synthase/homocitrate synthase family. LeuA type 1 subfamily. In terms of assembly, homodimer. The cofactor is Mn(2+).

It localises to the cytoplasm. It catalyses the reaction 3-methyl-2-oxobutanoate + acetyl-CoA + H2O = (2S)-2-isopropylmalate + CoA + H(+). Its pathway is amino-acid biosynthesis; L-leucine biosynthesis; L-leucine from 3-methyl-2-oxobutanoate: step 1/4. Its function is as follows. Catalyzes the condensation of the acetyl group of acetyl-CoA with 3-methyl-2-oxobutanoate (2-ketoisovalerate) to form 3-carboxy-3-hydroxy-4-methylpentanoate (2-isopropylmalate). The polypeptide is 2-isopropylmalate synthase (Sediminispirochaeta smaragdinae (strain DSM 11293 / JCM 15392 / SEBR 4228) (Spirochaeta smaragdinae)).